A 387-amino-acid polypeptide reads, in one-letter code: MKFVDEAVIRVEAGDGGSGCVSFRREKYVPDGGPDGGDGGDGGSVYLQADENLNTLIDYRFERFHFAERGENGRGRDCTGHGGKDLILKVPVGTRAVDEETQEALGDLKTHGQKLLVAKGGFHGLGNTRFKSSTNRAPRQKTLGTPGEVRSLRLELMLLADVGLLGMPNAGKSTFIRSVSRAKPKVADYPFTTLVPNLGVVTPRHGQSFVIADIPGLIEGAAEGAGLGIRFLKHLERCRVLLHILDIEPIDGSDPVDSARAIVGELEKHSPLLASKPRWLVFNKTDLLLEEELQERVDRIVKELDWQGDVYCISAYNREGTQELALKLMDFIDALPPEVEEDPDAEVEFKWDNYHQKTQEVVNEDYDDDFDDDFDDDDYDVEIIYQR.

The region spanning Met-1–Leu-159 is the Obg domain. In terms of domain architecture, OBG-type G spans Ala-160–Asp-333. Residues Gly-166–Ser-173, Phe-191–Val-195, Asp-213–Gly-216, Asn-283–Asp-286, and Ser-314–Tyr-316 each bind GTP. The Mg(2+) site is built by Ser-173 and Thr-193.

Belongs to the TRAFAC class OBG-HflX-like GTPase superfamily. OBG GTPase family. Monomer. Requires Mg(2+) as cofactor.

It is found in the cytoplasm. Functionally, an essential GTPase which binds GTP, GDP and possibly (p)ppGpp with moderate affinity, with high nucleotide exchange rates and a fairly low GTP hydrolysis rate. Plays a role in control of the cell cycle, stress response, ribosome biogenesis and in those bacteria that undergo differentiation, in morphogenesis control. The protein is GTPase Obg of Shewanella loihica (strain ATCC BAA-1088 / PV-4).